The chain runs to 118 residues: MKLKTLPPTLRDKNRYIAFEIISDDEFTKDEVKSLIWEASLRVLGELGTALAKPWFIKYDPKTKTGIVRCDREYVEHLRFALMLATDFNGKRLIIRTLGVSGTIKRLKKKFLSQYGWK.

This sequence belongs to the eukaryotic/archaeal RNase P protein component 2 family. In terms of assembly, consists of a catalytic RNA component and at least 4-5 protein subunits.

It localises to the cytoplasm. It catalyses the reaction Endonucleolytic cleavage of RNA, removing 5'-extranucleotides from tRNA precursor.. In terms of biological role, part of ribonuclease P, a protein complex that generates mature tRNA molecules by cleaving their 5'-ends. This chain is Ribonuclease P protein component 2, found in Pyrococcus abyssi (strain GE5 / Orsay).